The following is a 275-amino-acid chain: 4-diphosphocytidyl-2-C-methyl-D-erythritol kinase (275 aa).

The active site involves K14. Residue 98-108 coordinates ATP; it reads PMGAGLGGGSS. D140 is a catalytic residue.

It belongs to the GHMP kinase family. IspE subfamily.

It catalyses the reaction 4-CDP-2-C-methyl-D-erythritol + ATP = 4-CDP-2-C-methyl-D-erythritol 2-phosphate + ADP + H(+). It participates in isoprenoid biosynthesis; isopentenyl diphosphate biosynthesis via DXP pathway; isopentenyl diphosphate from 1-deoxy-D-xylulose 5-phosphate: step 3/6. Its function is as follows. Catalyzes the phosphorylation of the position 2 hydroxy group of 4-diphosphocytidyl-2C-methyl-D-erythritol. This Francisella tularensis subsp. tularensis (strain WY96-3418) protein is 4-diphosphocytidyl-2-C-methyl-D-erythritol kinase.